The sequence spans 195 residues: ATP-dependent Clp protease proteolytic subunit (195 aa).

Residue Ser98 is the Nucleophile of the active site. His123 is a catalytic residue.

Belongs to the peptidase S14 family. In terms of assembly, fourteen ClpP subunits assemble into 2 heptameric rings which stack back to back to give a disk-like structure with a central cavity, resembling the structure of eukaryotic proteasomes.

It localises to the cytoplasm. The enzyme catalyses Hydrolysis of proteins to small peptides in the presence of ATP and magnesium. alpha-casein is the usual test substrate. In the absence of ATP, only oligopeptides shorter than five residues are hydrolyzed (such as succinyl-Leu-Tyr-|-NHMec, and Leu-Tyr-Leu-|-Tyr-Trp, in which cleavage of the -Tyr-|-Leu- and -Tyr-|-Trp bonds also occurs).. Functionally, cleaves peptides in various proteins in a process that requires ATP hydrolysis. Has a chymotrypsin-like activity. Plays a major role in the degradation of misfolded proteins. In Caldanaerobacter subterraneus subsp. tengcongensis (strain DSM 15242 / JCM 11007 / NBRC 100824 / MB4) (Thermoanaerobacter tengcongensis), this protein is ATP-dependent Clp protease proteolytic subunit.